The following is a 194-amino-acid chain: MKVIIVKIWNKINGITLINDDFLNVDLPNESIDLIVTSPPYNVGIDYNQHDDTIPYEEYLDWTKQWLKKALTLLKKDGRLCLNIPLDKNKGGIKPVYADIVKIALDVGFKYQTTIIWNEQNISRRTAWGSFMSASAPYVIAPVETIVVLYKESWKKLSKGESDITKEEFIEWTNGLWTFPGESKKELDIQHHFR.

This sequence belongs to the N(4)/N(6)-methyltransferase family. N(4) subfamily.

The enzyme catalyses a 2'-deoxycytidine in DNA + S-adenosyl-L-methionine = an N(4)-methyl-2'-deoxycytidine in DNA + S-adenosyl-L-homocysteine + H(+). Functionally, a beta subtype methylase that recognizes the double-stranded sequence 5'-CCGG-3', methylates C-1 on both strands, and protects the DNA from cleavage by the MjaVI endonuclease. The chain is Type II methyltransferase M.MjaVI (mjaVIM) from Methanocaldococcus jannaschii (strain ATCC 43067 / DSM 2661 / JAL-1 / JCM 10045 / NBRC 100440) (Methanococcus jannaschii).